The following is a 567-amino-acid chain: Low-affinity glucose transporter HXT3 (567 aa).

Over residues methionine 1–methionine 29 the composition is skewed to polar residues. Residues methionine 1 to asparagine 30 are disordered. At methionine 1–glycine 57 the chain is on the cytoplasmic side. At serine 23 the chain carries Phosphoserine. A helical membrane pass occupies residues alanine 58–tryptophan 78. The Extracellular portion of the chain corresponds to aspartate 79–glycine 113. A helical transmembrane segment spans residues leucine 114–glycine 134. Residues aspartate 135–lysine 140 are Cytoplasmic-facing. Residues methionine 141–isoleucine 161 traverse the membrane as a helical segment. The Extracellular segment spans residues asparagine 162–arginine 171. The helical transmembrane segment at isoleucine 172–valine 192 threads the bilayer. Residues alanine 193–arginine 198 lie on the Cytoplasmic side of the membrane. Residues glycine 199–threonine 219 traverse the membrane as a helical segment. Over asparagine 220 to arginine 233 the chain is Extracellular. A glycan (N-linked (GlcNAc...) asparagine) is linked at asparagine 225. Residues valine 234–proline 254 form a helical membrane-spanning segment. Over glutamate 255 to aspartate 337 the chain is Cytoplasmic. A helical membrane pass occupies residues asparagine 338 to serine 354. Over aspartate 355–serine 360 the chain is Extracellular. A helical transmembrane segment spans residues isoleucine 361–valine 378. The Cytoplasmic portion of the chain corresponds to aspartate 379–asparagine 385. The chain crosses the membrane as a helical span at residues cysteine 386–valine 406. The Extracellular portion of the chain corresponds to threonine 407–valine 428. Asparagine 416 is a glycosylation site (N-linked (GlcNAc...) asparagine). The chain crosses the membrane as a helical span at residues phenylalanine 429 to isoleucine 449. Residues serine 450–threonine 466 are Cytoplasmic-facing. A helical membrane pass occupies residues alanine 467 to isoleucine 487. Position 488 (asparagine 488) is a topological domain, extracellular. Residues phenylalanine 489–phenylalanine 509 form a helical membrane-spanning segment. Residues valine 510–lysine 567 are Cytoplasmic-facing.

It belongs to the major facilitator superfamily. Sugar transporter (TC 2.A.1.1) family.

Its subcellular location is the membrane. Low-affinity glucose transporter. This Saccharomyces cerevisiae (strain ATCC 204508 / S288c) (Baker's yeast) protein is Low-affinity glucose transporter HXT3 (HXT3).